Here is a 323-residue protein sequence, read N- to C-terminus: Lipoyl synthase (323 aa).

Residues cysteine 65, cysteine 70, cysteine 76, cysteine 91, cysteine 95, cysteine 98, and serine 304 each contribute to the [4Fe-4S] cluster site. Positions 77–293 (FNNGTATFMI…KKEALSIGFT (217 aa)) constitute a Radical SAM core domain.

Belongs to the radical SAM superfamily. Lipoyl synthase family. It depends on [4Fe-4S] cluster as a cofactor.

It localises to the cytoplasm. The enzyme catalyses [[Fe-S] cluster scaffold protein carrying a second [4Fe-4S](2+) cluster] + N(6)-octanoyl-L-lysyl-[protein] + 2 oxidized [2Fe-2S]-[ferredoxin] + 2 S-adenosyl-L-methionine + 4 H(+) = [[Fe-S] cluster scaffold protein] + N(6)-[(R)-dihydrolipoyl]-L-lysyl-[protein] + 4 Fe(3+) + 2 hydrogen sulfide + 2 5'-deoxyadenosine + 2 L-methionine + 2 reduced [2Fe-2S]-[ferredoxin]. Its pathway is protein modification; protein lipoylation via endogenous pathway; protein N(6)-(lipoyl)lysine from octanoyl-[acyl-carrier-protein]: step 2/2. Its function is as follows. Catalyzes the radical-mediated insertion of two sulfur atoms into the C-6 and C-8 positions of the octanoyl moiety bound to the lipoyl domains of lipoate-dependent enzymes, thereby converting the octanoylated domains into lipoylated derivatives. This chain is Lipoyl synthase, found in Buchnera aphidicola subsp. Acyrthosiphon pisum (strain 5A).